A 273-amino-acid polypeptide reads, in one-letter code: SUMO-1 cysteine protease S273R (273 aa).

Active-site residues include histidine 168 and asparagine 187. Glutamine 226 is a substrate binding site. The Nucleophile role is filled by cysteine 232.

The protein belongs to the peptidase C63 family.

The protein localises to the host cytoplasm. It localises to the virion. Functionally, cysteine protease that plays several role during infection including processing of the structural polyprotein or inhibition of the host immune response. Catalyzes the maturation of the pp220 and pp62 polyprotein precursors into core-shell proteins. Plays a role in the disruption of host pyroptosis via specific cleavage of gasdermin D/GSDMD. In addition, strongly decreases the host cGAS-STING signaling by targeting IKBKE via its enzymatic activity. Also impairs host FOXJ1-mediated antiviral effect via degradation of FOXJ1. In Ornithodoros (relapsing fever ticks), this protein is SUMO-1 cysteine protease S273R.